The primary structure comprises 286 residues: Ribosomal RNA small subunit methyltransferase A (286 aa).

Residues H11, L13, G44, E65, D90, and N115 each coordinate S-adenosyl-L-methionine.

Belongs to the class I-like SAM-binding methyltransferase superfamily. rRNA adenine N(6)-methyltransferase family. RsmA subfamily.

Its subcellular location is the cytoplasm. It carries out the reaction adenosine(1518)/adenosine(1519) in 16S rRNA + 4 S-adenosyl-L-methionine = N(6)-dimethyladenosine(1518)/N(6)-dimethyladenosine(1519) in 16S rRNA + 4 S-adenosyl-L-homocysteine + 4 H(+). Its function is as follows. Specifically dimethylates two adjacent adenosines (A1518 and A1519) in the loop of a conserved hairpin near the 3'-end of 16S rRNA in the 30S particle. May play a critical role in biogenesis of 30S subunits. The chain is Ribosomal RNA small subunit methyltransferase A from Nostoc punctiforme (strain ATCC 29133 / PCC 73102).